Consider the following 188-residue polypeptide: Ion-translocating oxidoreductase complex subunit B (188 aa).

The hydrophobic stretch occupies residues 1–23; sequence MFTAIWVMVGLAIAIGLILGWSA. The region spanning 29-88 is the 4Fe-4S domain; it reads EGNPLAEKIDAILPQTQCGQCGFPGCRPYAEAIAKGEADINQCPPGGEEGVKKLAELLGV. [4Fe-4S] cluster contacts are provided by cysteine 46, cysteine 49, cysteine 54, cysteine 71, cysteine 113, cysteine 116, cysteine 119, cysteine 123, cysteine 143, cysteine 146, cysteine 149, and cysteine 153. 4Fe-4S ferredoxin-type domains are found at residues 104–133 and 134–163; these read SVAF…GAAK and QMHT…MVPI.

The protein belongs to the 4Fe4S bacterial-type ferredoxin family. RnfB subfamily. The complex is composed of six subunits: RnfA, RnfB, RnfC, RnfD, RnfE and RnfG. Requires [4Fe-4S] cluster as cofactor.

It localises to the cell inner membrane. Its function is as follows. Part of a membrane-bound complex that couples electron transfer with translocation of ions across the membrane. The polypeptide is Ion-translocating oxidoreductase complex subunit B (Thiobacillus denitrificans (strain ATCC 25259 / T1)).